The sequence spans 296 residues: MLIIDGKKVSIDLKSELKVRVDEHRAATGKVPGLTVIIVGEDPASQVYVRNKAKSCKETGMHSSVIEMDASTSEEALLSRIRELNDDPDVHGILVQQPLPKQIDEFAVTLAIDPAKDVDGFHPENLGRLVMGHLDKCFVSCTPYGILELLGRYNIETKGKHCVVVGRSNIVGKPMANLMLQKLDATNCTVTICHSATKDIPSYTRQADILIAAIGKAGFITADMVKPGAVVIDVGINRIDDPSTKSGSRLAGDVDYEGVSAIASAMTPVPGGVGPMTIAMLLKNTLQSFERANNLQ.

NADP(+)-binding positions include 166-168, Ser-195, and Ile-236; that span reads GRS.

The protein belongs to the tetrahydrofolate dehydrogenase/cyclohydrolase family. Homodimer.

The catalysed reaction is (6R)-5,10-methylene-5,6,7,8-tetrahydrofolate + NADP(+) = (6R)-5,10-methenyltetrahydrofolate + NADPH. It catalyses the reaction (6R)-5,10-methenyltetrahydrofolate + H2O = (6R)-10-formyltetrahydrofolate + H(+). Its pathway is one-carbon metabolism; tetrahydrofolate interconversion. Its function is as follows. Catalyzes the oxidation of 5,10-methylenetetrahydrofolate to 5,10-methenyltetrahydrofolate and then the hydrolysis of 5,10-methenyltetrahydrofolate to 10-formyltetrahydrofolate. The protein is Bifunctional protein FolD of Chlorobium limicola (strain DSM 245 / NBRC 103803 / 6330).